The following is a 471-amino-acid chain: Anthranilate 1,2-dioxygenase large subunit (471 aa).

Positions 52–160 constitute a Rieske domain; the sequence is IYACHESEIP…IASYRGFVFV (109 aa). The [2Fe-2S] cluster site is built by Cys93, His95, Cys113, and His116. His220, His225, and Asp379 together coordinate Fe cation.

The protein belongs to the bacterial ring-hydroxylating dioxygenase alpha subunit family. The anthranilate dioxygenase (AntDO) multicomponent enzyme system is composed of an oxygenase component and a NADH:acceptor reductase component (AntC). The oxygenase component is a heterohexamer of 3 large (AntA) and 3 small (AntB) subunits. Fe cation is required as a cofactor. [2Fe-2S] cluster serves as cofactor.

The catalysed reaction is anthranilate + NADH + O2 + 3 H(+) = catechol + NH4(+) + CO2 + NAD(+). It catalyses the reaction anthranilate + NADPH + O2 + 3 H(+) = catechol + NH4(+) + CO2 + NADP(+). The protein operates within aromatic compound metabolism; anthranilate degradation via hydroxylation; catechol from anthranilate: step 1/1. Component of anthranilate dioxygenase multicomponent enzyme system which catalyzes the incorporation of both atoms of molecular oxygen into anthranilate to form catechol. The protein is Anthranilate 1,2-dioxygenase large subunit of Acinetobacter baylyi (strain ATCC 33305 / BD413 / ADP1).